Here is a 584-residue protein sequence, read N- to C-terminus: Cytosolic Fe-S cluster assembly factor NAR1 (584 aa).

Cysteine 20, cysteine 81, cysteine 84, cysteine 87, cysteine 190, cysteine 245, cysteine 465, and cysteine 469 together coordinate [4Fe-4S] cluster.

It belongs to the NARF family.

Component of the cytosolic Fe/S protein assembly machinery. Required for maturation of extramitochondrial Fe/S proteins. May play a role in the transfer of pre-assembled Fe/S clusters to target apoproteins. The protein is Cytosolic Fe-S cluster assembly factor NAR1 (NAR1) of Candida dubliniensis (strain CD36 / ATCC MYA-646 / CBS 7987 / NCPF 3949 / NRRL Y-17841) (Yeast).